The following is a 112-amino-acid chain: Nucleoid-associated protein FTW_0607 (112 aa).

The tract at residues 1–27 (MNFDMSKLMQQAQKMQEQMKKAQQERE) is disordered. The span at 17–27 (EQMKKAQQERE) shows a compositional bias: basic and acidic residues.

Belongs to the YbaB/EbfC family. Homodimer.

It is found in the cytoplasm. The protein resides in the nucleoid. Its function is as follows. Binds to DNA and alters its conformation. May be involved in regulation of gene expression, nucleoid organization and DNA protection. This Francisella tularensis subsp. tularensis (strain WY96-3418) protein is Nucleoid-associated protein FTW_0607.